Consider the following 295-residue polypeptide: Nucleotide-binding protein EF_0766 (295 aa).

Position 12–19 (12–19 (GMSGAGKT)) interacts with ATP. 62-65 (DLRS) serves as a coordination point for GTP.

Belongs to the RapZ-like family.

Displays ATPase and GTPase activities. In Enterococcus faecalis (strain ATCC 700802 / V583), this protein is Nucleotide-binding protein EF_0766.